Reading from the N-terminus, the 167-residue chain is Shikimate kinase (167 aa).

Residue 12 to 17 coordinates ATP; sequence GSGKTT. T16 contacts Mg(2+). Positions 34, 58, and 80 each coordinate substrate. Position 117 (R117) interacts with ATP. R135 contributes to the substrate binding site. R152 is an ATP binding site.

Belongs to the shikimate kinase family. As to quaternary structure, monomer. The cofactor is Mg(2+).

Its subcellular location is the cytoplasm. It catalyses the reaction shikimate + ATP = 3-phosphoshikimate + ADP + H(+). The protein operates within metabolic intermediate biosynthesis; chorismate biosynthesis; chorismate from D-erythrose 4-phosphate and phosphoenolpyruvate: step 5/7. Catalyzes the specific phosphorylation of the 3-hydroxyl group of shikimic acid using ATP as a cosubstrate. The sequence is that of Shikimate kinase from Salinispora arenicola (strain CNS-205).